We begin with the raw amino-acid sequence, 1499 residues long: Collagen alpha-2(V) chain (1499 aa).

The first 26 residues, 1 to 26 (MMANWAEARPLLILIVLLGQFVSIKA), serve as a signal peptide directing secretion. Residues 39–97 (IACTQNGQMYLNRDIWKPAPCQICVCDNGAILCDKIECQDVLDCADPVTPPGECCPVCS) form the VWFC domain. A disordered region spans residues 104–1268 (NTNFGRGRKG…DDKNKTDPGV (1165 aa)). Residues 170–182 (PGAPGPPGHPSHP) are compositionally biased toward pro residues. Residues 212 to 227 (PGSVGPVGPRGPQGLQ) show a composition bias toward low complexity. Positions 236-248 (TGPPGEPGDPGPM) are enriched in pro residues. A hydroxyproline mark is found at Pro290, Pro293, and Pro296. Composition is skewed to low complexity over residues 322–340 (EAGP…PRGM) and 427–443 (TPGA…SGPP). A Cell attachment site motif is present at residues 506–508 (RGD). Composition is skewed to low complexity over residues 604 to 626 (SIGI…SGDP) and 694 to 709 (DQGV…PLGP). Pro611 and Pro617 each carry hydroxyproline. A compositionally biased stretch (basic and acidic residues) spans 710 to 721 (RGERGNPGERGE). Over residues 732 to 741 (GMAGGHGPDG) the composition is skewed to gly residues. A compositionally biased stretch (low complexity) spans 742 to 758 (PKGSPGPSGTPGDTGPP). The segment covering 776-787 (KGDRGGIGEKGA) has biased composition (basic and acidic residues). Residues 826 to 841 (PPGSRGNPGSRGENGP) are compositionally biased toward low complexity. Positions 894 to 903 (GLKGGRGTQG) are enriched in gly residues. At Pro919 the chain carries 3-hydroxyproline; partial. Pro residues predominate over residues 919 to 929 (PPGPAGAPGPA). 6 consecutive short sequence motifs (cell attachment site) follow at residues 944-946 (RGD), 1067-1069 (RGD), 1070-1072 (RGD), 1100-1102 (RGD), 1127-1129 (RGD), and 1136-1138 (RGD). Basic and acidic residues predominate over residues 1063-1072 (AVGERGDRGD). Low complexity predominate over residues 1093 to 1114 (APGDAGQRGDPGSRGPIGPPGR). Positions 1127–1141 (RGDKGDHGDRGDRGQ) are enriched in basic and acidic residues. Pro1156 carries the 3-hydroxyproline; partial modification. 2 stretches are compositionally biased toward pro residues: residues 1171-1181 (PFGPRGPPGPV) and 1211-1226 (EGPP…PGPP). Positions 1230–1499 (TAALGDIMGH…GVEIGPVCFV (270 aa)) are cleaved as a propeptide — C-terminal propeptide. N-linked (GlcNAc...) asparagine glycosylation is present at Asn1262. The region spanning 1266 to 1499 (PGVHATLKSL…GVEIGPVCFV (234 aa)) is the Fibrillar collagen NC1 domain. Intrachain disulfides connect Cys1296-Cys1328, Cys1336-Cys1497, and Cys1405-Cys1450. Ca(2+) is bound by residues Asp1314, Asn1316, Gln1317, and Asp1322. N-linked (GlcNAc...) asparagine glycosylation is present at Asn1400.

It belongs to the fibrillar collagen family. In terms of assembly, trimers of two alpha 1(V) and one alpha 2(V) chains in most tissues and trimers of one alpha 1(V), one alpha 2(V), and one alpha 3(V) chains in placenta. Post-translationally, prolines at the third position of the tripeptide repeating unit (G-X-P) are hydroxylated in some or all of the chains. Probably 3-hydroxylated on Pro-919 and Pro-1156 by LEPREL1.

Its subcellular location is the secreted. The protein resides in the extracellular space. The protein localises to the extracellular matrix. Type V collagen is a member of group I collagen (fibrillar forming collagen). It is a minor connective tissue component of nearly ubiquitous distribution. Type V collagen binds to DNA, heparan sulfate, thrombospondin, heparin, and insulin. Type V collagen is a key determinant in the assembly of tissue-specific matrices. This is Collagen alpha-2(V) chain (COL5A2) from Homo sapiens (Human).